A 1285-amino-acid polypeptide reads, in one-letter code: ABC-type transporter fsqE (1285 aa).

Positions 54–343 constitute an ABC transmembrane type-1 1 domain; that stretch reads VSSICAVLAG…IAPSAQALLS (290 aa). The next 6 helical transmembrane spans lie at 57-77, 102-122, 176-196, 203-223, 281-301, and 312-332; these read ICAV…GLLV, LYYV…TVGF, LAVM…AFIM, IISP…AYMV, VAGM…LAFW, and MSVA…FAII. The ABC transporter 1 domain occupies 380-622; it reads LDRVGLIYPS…NGAYAALVQK (243 aa). 413-420 contributes to the ATP binding site; the sequence is GSSGSGKS. Asn-467 is a glycosylation site (N-linked (GlcNAc...) asparagine). The segment at 627–654 is disordered; the sequence is DTHDHKAPDGARLSIEDDDDEDSRYGGN. A run of 6 helical transmembrane segments spans residues 707–727, 753–773, 831–851, 855–875, 931–951, and 968–988; these read LFGL…SVFF, GLYV…EIAL, GILT…AIGW, LVCT…LQVL, ILLA…CAAL, and FQVY…GSIF. The ABC transmembrane type-1 2 domain maps to 713-996; it reads AILAGLTIPV…IFTYAPDASK (284 aa). A glycan (N-linked (GlcNAc...) asparagine) is linked at Asn-1037. In terms of domain architecture, ABC transporter 2 spans 1043-1281; it reads VEFEHVSFTY…RGKYWEMVSM (239 aa). 1078-1085 is an ATP binding site; sequence GQSGSGKS. Asn-1138 carries an N-linked (GlcNAc...) asparagine glycan.

This sequence belongs to the ABC transporter superfamily. ABCB family. Multidrug resistance exporter (TC 3.A.1.201) subfamily.

The protein localises to the membrane. Its pathway is secondary metabolite biosynthesis. ABC-type transporter; part of the gene cluster that mediates the biosynthesis of the isoquinoline alkaloids fumisoquin A, fumisoquin B and fumisoquin C; as well as small amounts of fumipyrrole as a shunt metabolite. The products of the cluster lead to a brown coloration and are important for growth and conidiation. FsqE possibly plays a role of self-protection. This Aspergillus fumigatus (strain ATCC MYA-4609 / CBS 101355 / FGSC A1100 / Af293) (Neosartorya fumigata) protein is ABC-type transporter fsqE.